Here is a 186-residue protein sequence, read N- to C-terminus: Small ribosomal subunit protein uS5 (186 aa).

Residues 20–83 (FVDKLVHINR…EAAKRDMIFV (64 aa)) enclose the S5 DRBM domain.

This sequence belongs to the universal ribosomal protein uS5 family. Part of the 30S ribosomal subunit. Contacts proteins S4 and S8.

With S4 and S12 plays an important role in translational accuracy. In terms of biological role, located at the back of the 30S subunit body where it stabilizes the conformation of the head with respect to the body. This Brucella anthropi (strain ATCC 49188 / DSM 6882 / CCUG 24695 / JCM 21032 / LMG 3331 / NBRC 15819 / NCTC 12168 / Alc 37) (Ochrobactrum anthropi) protein is Small ribosomal subunit protein uS5.